A 224-amino-acid chain; its full sequence is UPF0758 protein PSPA7_6095 (224 aa).

In terms of domain architecture, MPN spans 102-224; that stretch reads VLESPQAVRD…PLSLAEYGWM (123 aa). Positions 173, 175, and 186 each coordinate Zn(2+). Residues 173-186 carry the JAMM motif motif; sequence HNHPSGDARPSLAD.

This sequence belongs to the UPF0758 family.

The chain is UPF0758 protein PSPA7_6095 from Pseudomonas paraeruginosa (strain DSM 24068 / PA7) (Pseudomonas aeruginosa (strain PA7)).